The following is a 310-amino-acid chain: B3 domain-containing transcription factor NGA1 (310 aa).

The disordered stretch occupies residues 1 to 26 (MMTDLSLTRDEDEEEAKPLAEEEGAR). Over residues 16–26 (AKPLAEEEGAR) the composition is skewed to basic and acidic residues. Residues 35 to 141 (FDKVVTPSDV…RLFIDWRRRP (107 aa)) constitute a DNA-binding region (TF-B3). Residues 251–268 (ESGMTNSTEEESSSSGGS) show a composition bias toward low complexity. A disordered region spans residues 251-310 (ESGMTNSTEEESSSSGGSLPRGGGGGASSSSFFQLRLGSSSEDDHFTKKGKSSLSFDLDQ).

In terms of assembly, interacts with BRX. Interacts with BZIP30.

The protein resides in the nucleus. Its function is as follows. Regulates lateral organ growth. Functionally redundant with NGA2, NGA3 and NGA4. The sequence is that of B3 domain-containing transcription factor NGA1 (NGA1) from Arabidopsis thaliana (Mouse-ear cress).